The following is a 76-amino-acid chain: Tautomerase PptA (76 aa).

Pro2 (proton acceptor; via imino nitrogen) is an active-site residue.

The protein belongs to the 4-oxalocrotonate tautomerase family. PptA subfamily. In terms of assembly, homodimer.

The protein localises to the cytoplasm. In Enterobacter sp. (strain 638), this protein is Tautomerase PptA.